Here is a 277-residue protein sequence, read N- to C-terminus: Urease accessory protein UreD (277 aa).

Belongs to the UreD family. As to quaternary structure, ureD, UreF and UreG form a complex that acts as a GTP-hydrolysis-dependent molecular chaperone, activating the urease apoprotein by helping to assemble the nickel containing metallocenter of UreC. The UreE protein probably delivers the nickel.

It is found in the cytoplasm. Its function is as follows. Required for maturation of urease via the functional incorporation of the urease nickel metallocenter. In Yersinia pestis bv. Antiqua (strain Antiqua), this protein is Urease accessory protein UreD.